Reading from the N-terminus, the 427-residue chain is L-rhamnose isomerase (427 aa).

The Mn(2+) site is built by histidine 264, aspartate 296, and aspartate 298.

The protein belongs to the rhamnose isomerase family. It depends on Mn(2+) as a cofactor.

The protein localises to the cytoplasm. The enzyme catalyses L-rhamnopyranose = L-rhamnulose. It functions in the pathway carbohydrate degradation; L-rhamnose degradation; glycerone phosphate from L-rhamnose: step 1/3. Functionally, catalyzes the interconversion of L-rhamnose and L-rhamnulose. The polypeptide is L-rhamnose isomerase (Rhodopirellula baltica (strain DSM 10527 / NCIMB 13988 / SH1)).